Consider the following 686-residue polypeptide: Solute carrier family 22 member 23 (686 aa).

Disordered stretches follow at residues 1-62 and 169-193; these read MAID…GGGP and GNRS…DKGD. Residue Asn-24 is glycosylated (N-linked (GlcNAc...) asparagine). Transmembrane regions (helical) follow at residues 234 to 254 and 258 to 278; these read FSLL…ADWV and PVLL…ALSV. Asn-279 carries an N-linked (GlcNAc...) asparagine glycan. Transmembrane regions (helical) follow at residues 288 to 308, 315 to 335, 344 to 364, 467 to 487, 494 to 514, 538 to 558, 569 to 589, and 598 to 618; these read FFEG…RIEL, FMIT…MPGL, VLQA…SIFP, ADYY…CVVV, GGLL…LGLL, IAFS…SVFF, CGGL…APII, and FLHH…ILLL.

Belongs to the major facilitator (TC 2.A.1) superfamily. Organic cation transporter (TC 2.A.1.19) family.

The protein resides in the membrane. The chain is Solute carrier family 22 member 23 (SLC22A23) from Homo sapiens (Human).